The chain runs to 447 residues: C4-dicarboxylate transport protein (447 aa).

Transmembrane regions (helical) follow at residues 22–42, 52–72, 90–110, 159–179, 199–219, 232–252, 325–347, and 366–386; these read FQVI…PLVG, FINL…VTGI, AYFL…AHVV, GNIL…ASVG, LVHI…AFTI, WLVG…LGVV, LFIA…LLVA, and AATL…ILGV.

This sequence belongs to the dicarboxylate/amino acid:cation symporter (DAACS) (TC 2.A.23) family.

It is found in the cell inner membrane. Its function is as follows. Responsible for the transport of dicarboxylates such as succinate, fumarate, and malate from the periplasm across the membrane. The protein is C4-dicarboxylate transport protein of Stenotrophomonas maltophilia (strain R551-3).